Here is a 1047-residue protein sequence, read N- to C-terminus: Ras GTPase-activating protein 1 (1047 aa).

Position 1 is an N-acetylmethionine (M1). The region spanning 181–272 (WYHGKLDRTI…LKGEKLLYPV (92 aa)) is the SH2 1 domain. An SH3 domain is found at 279–341 (EDRRRVRAIL…VEDLVEEVGR (63 aa)). In terms of domain architecture, SH2 2 spans 351–441 (WFHGKISKQE…VEGYYLKEPV (91 aa)). Residues 474–577 (NIVKKGYLLK…WMKGLQAFCN (104 aa)) enclose the PH domain. Positions 577–690 (NLRKSSPGTS…QKGHATDEWF (114 aa)) constitute a C2 domain. Y615 is subject to Phosphotyrosine. The 211-residue stretch at 764-974 (KLESLLLCTL…HRMIMFLDEL (211 aa)) folds into the Ras-GAP domain. At S831 the chain carries Phosphoserine.

As to quaternary structure, interacts with SQSTM1. Interacts with SPSB1; the interaction does not promote degradation. Interacts with CAV2 (tyrosine phosphorylated form). Directly interacts with NCK1. Interacts with PDGFRB (tyrosine phosphorylated). Interacts (via SH2 domain) with the 'Tyr-9' phosphorylated form of PDPK1. Interacts with tyrosine-phosphorylated EPHB4. In terms of processing, the N-terminus is blocked. Post-translationally, phosphorylated by SRC and LCK. The phosphorylation SRC inhibits its ability to stimulate the Ras-GTPase activity, whereas phosphorylation by LCK does not display any effect on stimulation activity. In terms of tissue distribution, in placental villi, detected only in the trophoblast layer (cytotrophoblast and syncytiotrophoblast). Not detected in stromal, endothelial or Hofbauer cells (at protein level).

The protein resides in the cytoplasm. Functionally, inhibitory regulator of the Ras-cyclic AMP pathway. Stimulates the GTPase of normal but not oncogenic Ras p21; this stimulation may be further increased in the presence of NCK1. This chain is Ras GTPase-activating protein 1 (RASA1), found in Homo sapiens (Human).